Reading from the N-terminus, the 118-residue chain is Large ribosomal subunit protein bL19 (118 aa).

Belongs to the bacterial ribosomal protein bL19 family.

This protein is located at the 30S-50S ribosomal subunit interface and may play a role in the structure and function of the aminoacyl-tRNA binding site. This chain is Large ribosomal subunit protein bL19, found in Geobacter metallireducens (strain ATCC 53774 / DSM 7210 / GS-15).